The chain runs to 435 residues: Dual specificity mitogen-activated protein kinase kinase jkk-1 (435 aa).

Residues 35–49 show a composition bias toward basic and acidic residues; sequence RDRRSTSVDQKHKEC. The disordered stretch occupies residues 35–90; it reads RDRRSTSVDQKHKECSSTSSSPQHQRPNNIGYLTSPMERKFTPLSMKPSPSRRDTE. Polar residues predominate over residues 50–66; it reads SSTSSSPQHQRPNNIGY. The region spanning 122–385 is the Protein kinase domain; sequence IHIISLLGSG…YRQLMKHDFY (264 aa). ATP-binding positions include 128 to 136 and K149; that span reads LGSGSCGVV. The Proton acceptor role is filled by D246.

This sequence belongs to the protein kinase superfamily. STE Ser/Thr protein kinase family. MAP kinase kinase subfamily. In terms of assembly, interacts with unc-16. Mg(2+) serves as cofactor. Expressed in most neurons, including nerve ring, head ganglions, dorsal and ventral nerve cords and tail ganglions.

The protein resides in the cytoplasm. It is found in the perikaryon. It localises to the cell projection. The protein localises to the axon. The enzyme catalyses L-seryl-[protein] + ATP = O-phospho-L-seryl-[protein] + ADP + H(+). It catalyses the reaction L-threonyl-[protein] + ATP = O-phospho-L-threonyl-[protein] + ADP + H(+). It carries out the reaction L-tyrosyl-[protein] + ATP = O-phospho-L-tyrosyl-[protein] + ADP + H(+). In terms of biological role, dual specificity protein kinase which acts as an essential component of the JNK signal transduction pathway. May phosphorylate jnk-1. Plays a role in coordinating locomotion via D-type GABAergic motoneurons and in regulating synaptic vesicle transport downstream of adapter protein unc-16 and probably by activating jnk-1. Positively regulates lifespan. Upon environmental stress such as heat stress regulates daf-16 nuclear translocation probably by activating jnk-1. Regulates germline cell apoptosis in response to heavy metals such as Cu(2+) and to arsenite. The protein is Dual specificity mitogen-activated protein kinase kinase jkk-1 of Caenorhabditis elegans.